The chain runs to 383 residues: Acetylornithine deacetylase (383 aa).

His-80 lines the Zn(2+) pocket. Residue Asp-82 is part of the active site. Asp-112 is a Zn(2+) binding site. Glu-144 is a catalytic residue. Residues Glu-145, Glu-169, and His-355 each contribute to the Zn(2+) site.

Belongs to the peptidase M20A family. ArgE subfamily. In terms of assembly, homodimer. Zn(2+) serves as cofactor. The cofactor is Co(2+). Glutathione is required as a cofactor.

It is found in the cytoplasm. The enzyme catalyses N(2)-acetyl-L-ornithine + H2O = L-ornithine + acetate. It participates in amino-acid biosynthesis; L-arginine biosynthesis; L-ornithine from N(2)-acetyl-L-ornithine (linear): step 1/1. Functionally, catalyzes the hydrolysis of the amide bond of N(2)-acetylated L-amino acids. Cleaves the acetyl group from N-acetyl-L-ornithine to form L-ornithine, an intermediate in L-arginine biosynthesis pathway, and a branchpoint in the synthesis of polyamines. This chain is Acetylornithine deacetylase, found in Klebsiella pneumoniae (strain 342).